The primary structure comprises 642 residues: Pentatricopeptide repeat-containing protein At3g16010 (642 aa).

PPR repeat units lie at residues 125–159 (DCST…TYVS), 161–195 (SPAV…KCKP), 196–230 (TSST…GDCF), 232–266 (DTIT…CMQP), 267–301 (TEKI…GCSP), 302–336 (TVYT…GLTP), 337–371 (DVVF…RCTP), 372–407 (TVVS…SVSP), 408–442 (SEFT…GFPP), 443–473 (CPAA…LKEN), 478–512 (SSRV…GSGP), 513–547 (DVYA…GCRA), 548–582 (DINS…GIKP), and 583–617 (DGVT…GFEY).

Belongs to the PPR family. P subfamily.

The chain is Pentatricopeptide repeat-containing protein At3g16010 from Arabidopsis thaliana (Mouse-ear cress).